The chain runs to 2925 residues: Otogelin (2925 aa).

Residues 1–25 (MGVLASALCWLLCVWLPWGEQAAES) form the signal peptide. The tract at residues 39–69 (GRSGARGMRNVKGMRNGPAQTRVSSSSSHQE) is disordered. The segment covering 56–69 (PAQTRVSSSSSHQE) has biased composition (polar residues). An EGF-like domain is found at 102–139 (HRAKCAPSYLFSCFNGGECVHPAFCDCRRFNATGPRCQ). Intrachain disulfides connect cysteine 106/cysteine 120, cysteine 114/cysteine 126, cysteine 128/cysteine 138, cysteine 152/cysteine 285, and cysteine 199/cysteine 206. The 173-residue stretch at 150–322 (SICRAWGQHH…SWQEQAPNQP (173 aa)) folds into the VWFD 1 domain. Positions 316–335 (EQAPNQPPGPTTSSLPRPPC) are disordered. Over residues 326-335 (TTSSLPRPPC) the composition is skewed to polar residues. Positions 512–688 (AECSVTGDIH…NSWKTLSACS (177 aa)) constitute a VWFD 2 domain. 3 disulfide bridges follow: cysteine 514/cysteine 652, cysteine 536/cysteine 687, and cysteine 558/cysteine 566. The 65-residue stretch at 780–844 (CEASKEYSPC…ADLCVPRNQC (65 aa)) folds into the TIL domain. Asparagine 914 carries an N-linked (GlcNAc...) asparagine glycan. The 169-residue stretch at 984–1152 (STCTAYGDRH…SWAAVECPDT (169 aa)) folds into the VWFD 3 domain. Intrachain disulfides connect cysteine 986–cysteine 1115 and cysteine 1030–cysteine 1037. A disordered region spans residues 1476–1540 (LGNETLPPSQ…PVVSPGPTQT (65 aa)). Residue asparagine 1478 is glycosylated (N-linked (GlcNAc...) asparagine). Residues 1502-1528 (PRTPTHRPALTPAAPLTTALNPPVTAT) are compositionally biased toward low complexity. Asparagine 1612 carries N-linked (GlcNAc...) asparagine glycosylation. Disordered stretches follow at residues 1636–1679 (GHGS…HKAV), 1693–1715 (VPQP…AGTA), and 1737–1788 (KGEA…ASLS). Over residues 1650–1659 (SLTASPSSRP) the composition is skewed to polar residues. Over residues 1694 to 1708 (PQPTQAQSASSPSTP) the composition is skewed to low complexity. Residues 1751–1764 (SPQPHPLPSAPPRP) show a composition bias toward pro residues. One can recognise a VWFD 4 domain in the interval 2110-2289 (CRCSIFPDLS…SWQVPSSLTS (180 aa)). Intrachain disulfides connect cysteine 2112/cysteine 2249, cysteine 2840/cysteine 2889, cysteine 2854/cysteine 2903, cysteine 2865/cysteine 2920, and cysteine 2869/cysteine 2922. The CTCK domain maps to 2840 to 2925 (CKKVTIRMTI…EPTDCACQWS (86 aa)).

Belongs to the otogelin family. Post-translationally, N-glycosylated. Not O-glycosylated.

The protein resides in the apical cell membrane. Its subcellular location is the secreted. The protein localises to the extracellular space. Its function is as follows. Glycoprotein specific to acellular membranes of the inner ear. May be required for the anchoring of the otoconial membranes and cupulae to the underlying neuroepithelia in the vestibule. May be involved in the organization and/or stabilization of the fibrillar network that compose the tectorial membrane in the cochlea. May play a role in mechanotransduction processes. The polypeptide is Otogelin (OTOG) (Homo sapiens (Human)).